We begin with the raw amino-acid sequence, 385 residues long: 8-amino-7-oxononanoate synthase (385 aa).

Arg-21 contacts substrate. Residue 108-109 participates in pyridoxal 5'-phosphate binding; the sequence is GF. Residue His-133 participates in substrate binding. Residues Ser-179, His-207, and Thr-233 each contribute to the pyridoxal 5'-phosphate site. Lys-236 bears the N6-(pyridoxal phosphate)lysine mark. Residue Thr-352 participates in substrate binding.

Belongs to the class-II pyridoxal-phosphate-dependent aminotransferase family. BioF subfamily. Homodimer. Requires pyridoxal 5'-phosphate as cofactor.

The enzyme catalyses 6-carboxyhexanoyl-[ACP] + L-alanine + H(+) = (8S)-8-amino-7-oxononanoate + holo-[ACP] + CO2. The protein operates within cofactor biosynthesis; biotin biosynthesis. Its function is as follows. Catalyzes the decarboxylative condensation of pimeloyl-[acyl-carrier protein] and L-alanine to produce 8-amino-7-oxononanoate (AON), [acyl-carrier protein], and carbon dioxide. The sequence is that of 8-amino-7-oxononanoate synthase from Salmonella typhimurium (strain LT2 / SGSC1412 / ATCC 700720).